Here is a 242-residue protein sequence, read N- to C-terminus: Probable transcriptional regulatory protein Cthe_2075 (242 aa).

This sequence belongs to the TACO1 family.

It is found in the cytoplasm. This Acetivibrio thermocellus (strain ATCC 27405 / DSM 1237 / JCM 9322 / NBRC 103400 / NCIMB 10682 / NRRL B-4536 / VPI 7372) (Clostridium thermocellum) protein is Probable transcriptional regulatory protein Cthe_2075.